A 332-amino-acid chain; its full sequence is Solute carrier family 25 member 16 (332 aa).

Solcar repeat units lie at residues 34 to 120 (FYWL…YKTL), 128 to 216 (SGHV…LKSV), and 238 to 328 (LKTH…MKQF). 6 helical membrane passes run 37 to 57 (LRSFLAGGIAGCCAKTTVAPL), 88 to 108 (GFLGLYKGNGAMMIRIFPYGA), 134 to 154 (LMAGSMAGMTAVICTYPLDMV), 191 to 211 (GLMPTILGMAPYAGVSFFTFG), 244 to 264 (LLCGGVAGAIAQTISYPFDVT), and 299 to 319 (GLYRGLSLNYIRCIPSQAVAF).

This sequence belongs to the mitochondrial carrier (TC 2.A.29) family.

It is found in the mitochondrion inner membrane. Its function is as follows. May be involved in the transport of coenzyme A in the mitochondrial matrix. Very little is known about the physiological function of this carrier. This Homo sapiens (Human) protein is Solute carrier family 25 member 16.